The sequence spans 293 residues: Ribosomal protein L11 methyltransferase (293 aa).

T145, G166, D188, and N230 together coordinate S-adenosyl-L-methionine.

Belongs to the methyltransferase superfamily. PrmA family.

The protein localises to the cytoplasm. It carries out the reaction L-lysyl-[protein] + 3 S-adenosyl-L-methionine = N(6),N(6),N(6)-trimethyl-L-lysyl-[protein] + 3 S-adenosyl-L-homocysteine + 3 H(+). Functionally, methylates ribosomal protein L11. The sequence is that of Ribosomal protein L11 methyltransferase from Actinobacillus succinogenes (strain ATCC 55618 / DSM 22257 / CCUG 43843 / 130Z).